The sequence spans 581 residues: NADH-quinone oxidoreductase subunit C/D (581 aa).

The interval 1–172 (MSATDLVSEL…PLFNMTAALF (172 aa)) is NADH dehydrogenase I subunit C. The interval 196 to 581 (ELMILNYGPH…IDYVMSDVDR (386 aa)) is NADH dehydrogenase I subunit D.

In the N-terminal section; belongs to the complex I 30 kDa subunit family. It in the C-terminal section; belongs to the complex I 49 kDa subunit family. As to quaternary structure, NDH-1 is composed of 13 different subunits. Subunits NuoB, CD, E, F, and G constitute the peripheral sector of the complex.

The protein localises to the cell inner membrane. It carries out the reaction a quinone + NADH + 5 H(+)(in) = a quinol + NAD(+) + 4 H(+)(out). NDH-1 shuttles electrons from NADH, via FMN and iron-sulfur (Fe-S) centers, to quinones in the respiratory chain. The immediate electron acceptor for the enzyme in this species is believed to be ubiquinone. Couples the redox reaction to proton translocation (for every two electrons transferred, four hydrogen ions are translocated across the cytoplasmic membrane), and thus conserves the redox energy in a proton gradient. This Rhodopseudomonas palustris (strain HaA2) protein is NADH-quinone oxidoreductase subunit C/D.